The following is a 411-amino-acid chain: Arginine deiminase (411 aa).

Residue C401 is the Amidino-cysteine intermediate of the active site.

The protein belongs to the arginine deiminase family.

It localises to the cytoplasm. It carries out the reaction L-arginine + H2O = L-citrulline + NH4(+). It functions in the pathway amino-acid degradation; L-arginine degradation via ADI pathway; carbamoyl phosphate from L-arginine: step 1/2. The polypeptide is Arginine deiminase (Staphylococcus epidermidis (strain ATCC 35984 / DSM 28319 / BCRC 17069 / CCUG 31568 / BM 3577 / RP62A)).